Reading from the N-terminus, the 79-residue chain is Small ribosomal subunit protein uS17 (79 aa).

This sequence belongs to the universal ribosomal protein uS17 family. In terms of assembly, part of the 30S ribosomal subunit.

In terms of biological role, one of the primary rRNA binding proteins, it binds specifically to the 5'-end of 16S ribosomal RNA. This is Small ribosomal subunit protein uS17 from Caulobacter sp. (strain K31).